The primary structure comprises 1134 residues: Ankyrin repeat and SAM domain-containing protein 1A (1134 aa).

G2 is subject to N-acetylglycine. The span at 33-55 (GGGGGGGSGGGGGGSGGGGGGLG) shows a compositional bias: gly residues. The segment at 33–57 (GGGGGGGSGGGGGGSGGGGGGLGSS) is disordered. ANK repeat units follow at residues 79–108 (TGYT…LTNV), 112–141 (KGCY…SHTR), 148–177 (DNET…DPTM), 181–210 (KFET…NLLS), 214–243 (KKHT…DSNY), and 246–275 (EMGS…DVNI). Over residues 305 to 317 (HMTGKRSTKEVDK) the composition is skewed to basic and acidic residues. Disordered regions lie at residues 305 to 338 (HMTG…KSQG), 375 to 422 (SMAS…EEDH), and 469 to 498 (VDGK…VPEQ). Phosphothreonine is present on T318. The span at 328 to 337 (SMDSISQKSQ) shows a compositional bias: polar residues. Residues 382 to 392 (SDQDSTNKEAE) show a composition bias toward basic and acidic residues. A Phosphoserine modification is found at S507. The segment at 569-650 (LTGLPTTNSR…MGSRSESLSN (82 aa)) is disordered. Residues 572 to 588 (LPTTNSRSHPETLTHTA) are compositionally biased toward polar residues. Basic and acidic residues predominate over residues 613 to 628 (PKAELKLSRSLSKSDS). 10 positions are modified to phosphoserine: S620, S622, S624, S626, S628, S647, S661, S663, S666, and S677. Residues 633–650 (CSPTEDATMGSRSESLSN) are compositionally biased toward polar residues. SAM domains lie at 696–762 (TLEQ…LPKV) and 770–837 (NSPP…YEEP). Residues 856-868 (TSSPLSQNDSCTG) are compositionally biased toward polar residues. Disordered stretches follow at residues 856 to 896 (TSSP…APSR) and 1079 to 1134 (AEMI…LSTN). S887 is modified (phosphoserine). One can recognise a PID domain in the interval 936-1091 (IFESCGYEAN…IETKSSKPVP (156 aa)). The segment covering 1123–1134 (PKPDSKRSLSTN) has biased composition (basic and acidic residues).

In terms of assembly, interacts (via SAM domain) with EPHA2 (via SAM domain). Interacts with EPHA8; EPHA8 kinase activity-independent but stimulated by EPHA8 ubiquitination. Interacts (via SAM domain) with EPHA6 (via SAM domain). Post-translationally, phosphorylated on tyrosine residues in response to EGF and PDGF. In terms of tissue distribution, widely expressed (at protein level).

It is found in the cytoplasm. It localises to the cell projection. Its function is as follows. Regulator of different signaling pathways. Regulates EPHA8 receptor tyrosine kinase signaling to control cell migration and neurite retraction. The protein is Ankyrin repeat and SAM domain-containing protein 1A (ANKS1A) of Homo sapiens (Human).